The following is a 187-amino-acid chain: Holliday junction branch migration complex subunit RuvA (187 aa).

Positions 1–64 are domain I; sequence MIEYIRGIIE…EDGFQIFGFK (64 aa). The interval 65 to 136 is domain II; it reads RKEELELFEK…ELKDKVPKEV (72 aa). The interval 136 to 139 is flexible linker; it reads VVVP. The interval 140–187 is domain III; sequence KEDSLLNEALEALLALGYTKSEAIYALSDVNCESVEQAVKEALKKLAK.

This sequence belongs to the RuvA family. In terms of assembly, homotetramer. Forms an RuvA(8)-RuvB(12)-Holliday junction (HJ) complex. HJ DNA is sandwiched between 2 RuvA tetramers; dsDNA enters through RuvA and exits via RuvB. An RuvB hexamer assembles on each DNA strand where it exits the tetramer. Each RuvB hexamer is contacted by two RuvA subunits (via domain III) on 2 adjacent RuvB subunits; this complex drives branch migration. In the full resolvosome a probable DNA-RuvA(4)-RuvB(12)-RuvC(2) complex forms which resolves the HJ.

It is found in the cytoplasm. The RuvA-RuvB-RuvC complex processes Holliday junction (HJ) DNA during genetic recombination and DNA repair, while the RuvA-RuvB complex plays an important role in the rescue of blocked DNA replication forks via replication fork reversal (RFR). RuvA specifically binds to HJ cruciform DNA, conferring on it an open structure. The RuvB hexamer acts as an ATP-dependent pump, pulling dsDNA into and through the RuvAB complex. HJ branch migration allows RuvC to scan DNA until it finds its consensus sequence, where it cleaves and resolves the cruciform DNA. This is Holliday junction branch migration complex subunit RuvA from Caldanaerobacter subterraneus subsp. tengcongensis (strain DSM 15242 / JCM 11007 / NBRC 100824 / MB4) (Thermoanaerobacter tengcongensis).